Here is a 121-residue protein sequence, read N- to C-terminus: Mu-hexatoxin-Mg1a (121 aa).

Residues methionine 1–alanine 20 form the signal peptide. Residues serine 21–arginine 80 constitute a propeptide that is removed on maturation. 3 disulfide bridges follow: cysteine 81-cysteine 95, cysteine 88-cysteine 102, and cysteine 94-cysteine 116. Position 120 is a lysine amide (lysine 120).

It belongs to the neurotoxin 14 (magi-1) family. 09 (magi-1) subfamily. Expressed by the venom gland.

It localises to the secreted. Its function is as follows. Insecticidal neurotoxin. Shows competition for site 3 of insect voltage-gated sodium channels (Nav). Induces flaccid paralysis when injected into lepidopteran larvae. Is not toxic to mice when injected intracranially at 20 pmol/g. This Macrothele gigas (Japanese funnel web spider) protein is Mu-hexatoxin-Mg1a.